A 337-amino-acid chain; its full sequence is Eukaryotic translation initiation factor 3 subunit H (337 aa).

The region spanning 21 to 153 (VQCDGLAVMK…LKAYRLTPQA (133 aa)) is the MPN domain.

Belongs to the eIF-3 subunit H family. In terms of assembly, component of the eukaryotic translation initiation factor 3 (eIF-3) complex. The eIF-3 complex interacts with pix. Interacts with mxt.

It is found in the cytoplasm. In terms of biological role, component of the eukaryotic translation initiation factor 3 (eIF-3) complex, which is involved in protein synthesis of a specialized repertoire of mRNAs and, together with other initiation factors, stimulates binding of mRNA and methionyl-tRNAi to the 40S ribosome. The eIF-3 complex specifically targets and initiates translation of a subset of mRNAs involved in cell proliferation. This is Eukaryotic translation initiation factor 3 subunit H from Drosophila grimshawi (Hawaiian fruit fly).